The chain runs to 274 residues: uncharacterized protein (274 aa).

A helical membrane pass occupies residues 238 to 258 (ILSVQVIFATVIALIAISVFC).

It localises to the membrane. This is an uncharacterized protein from Schizosaccharomyces pombe (strain 972 / ATCC 24843) (Fission yeast).